The chain runs to 575 residues: MSNGQLIYLMVAIAVILVLAYVVAIFLRKRNEGRLEALEERKEELYNLPVNDEVEAVKNMHLIGQSQVAFREWNQKWVDLSLNSFADIENNLFEAEGYNHSFRFLKASHQIDQIESQITLIDEDIAAIRNALADLEKQESKNSGRVLHALDLFEELQHRVAENSEQYGQALDEIEKQLENIQSEFSQFVTLNSSGDPVEAAVILDNTENHILALSHIVDRVPALVTTLSTELPDQLQDLESGYRKLIDANYHFVETDIEARFHLLYEAFKKNQENIRQLELDNAEYENGQAQEEINALYDIFTREIAAQKVVENLLATLPTYLQHMKENNTLLGEDIARLNKTYLLPETAASHVRRIQTELESFEAAIVEVTSNQEEPTQAYSVLEENLEDLQTQLKDIEDEQISVSERLTQIEKDDINARQKANVYVNRLHTIKRYMEKRNLPGIPQTFLKLFFTASNNTEDLMVELEQKMINIESVTRVLEIATNDMEALETETYNIVQYATLTEQLLQYSNRYRSFDERIQEAFNEALDIFEKEFDYHASFDKISQALEVAEPGVTNRFVTSYEKTRETIRF.

The Extracellular portion of the chain corresponds to 1–8 (MSNGQLIY). A helical transmembrane segment spans residues 9 to 27 (LMVAIAVILVLAYVVAIFL). Residues 28-575 (RKRNEGRLEA…YEKTRETIRF (548 aa)) lie on the Cytoplasmic side of the membrane. 4 coiled-coil regions span residues 110-191 (QIDQ…FVTL), 265-301 (LYEAFKKNQENIRQLELDNAEYENGQAQEEINALYDI), 354-416 (VRRI…IEKD), and 456-526 (TASN…IQEA).

Belongs to the EzrA family.

Its subcellular location is the cell membrane. Functionally, negative regulator of FtsZ ring formation; modulates the frequency and position of FtsZ ring formation. Inhibits FtsZ ring formation at polar sites. Interacts either with FtsZ or with one of its binding partners to promote depolymerization. The protein is Septation ring formation regulator EzrA of Streptococcus pneumoniae (strain JJA).